We begin with the raw amino-acid sequence, 258 residues long: MVSTENKIGLFKNKDDDIDGEEMRELPQKKFYRQRAHANPISDHEFDYPVFPEQMDWKKYFGDFSEGRQVEFADVGCGYGGLLIKLSTLYPEALMVGLEIRVKVSDYVQDKIHALRLREPGNYRNVACLRTNAMKYLPNYFRRHQLTKMFFLYPDPHFKKAKHKWRIITPTLLAEYAYVLKPGGLVYTITDVEELHIWMVRHLSAHPLFERLTDLEMKMDPVVEMLYDSTEEGQKVARNEGSKWSAVFRRLPNPVLSS.

S-adenosyl-L-methionine-binding positions include Gly-76, 99-100, 132-133, and Leu-152; these read EI and NA. Residue Asp-155 is part of the active site. 230 to 232 serves as a coordination point for S-adenosyl-L-methionine; the sequence is TEE.

Belongs to the class I-like SAM-binding methyltransferase superfamily. TrmB family.

The protein resides in the nucleus. It catalyses the reaction guanosine(46) in tRNA + S-adenosyl-L-methionine = N(7)-methylguanosine(46) in tRNA + S-adenosyl-L-homocysteine. It participates in tRNA modification; N(7)-methylguanine-tRNA biosynthesis. Catalyzes the formation of N(7)-methylguanine at position 46 (m7G46) in tRNA. The protein is tRNA (guanine-N(7)-)-methyltransferase of Brugia malayi (Filarial nematode worm).